The following is a 352-amino-acid chain: Ion-translocating oxidoreductase complex subunit D (352 aa).

5 helical membrane-spanning segments follow: residues 20-40 (IMLL…WFFG), 42-62 (GTLV…ALVL), 78-109 (ALLT…VIIA), 123-143 (PAMI…TSWL), and 148-168 (IAVN…GHTA). An FMN phosphoryl threonine modification is found at Thr187. 5 consecutive transmembrane segments (helical) span residues 214–234 (ILAG…GVWL), 242–262 (WHIP…GWLF), 267–287 (LAAP…FFIL), 301–321 (LIFG…GGYP), and 322–342 (DGVA…DYYT).

It belongs to the NqrB/RnfD family. The complex is composed of six subunits: RsxA, RsxB, RsxC, RsxD, RsxE and RsxG. The cofactor is FMN.

The protein localises to the cell inner membrane. Part of a membrane-bound complex that couples electron transfer with translocation of ions across the membrane. Required to maintain the reduced state of SoxR. The protein is Ion-translocating oxidoreductase complex subunit D of Escherichia coli O139:H28 (strain E24377A / ETEC).